The chain runs to 400 residues: Large envelope protein (400 aa).

The residue at position 1 (M1) is an N-acetylmethionine. G2 carries N-myristoyl glycine; by host lipidation. The interval 2–119 (GAPLSTARRG…PPLRDTHPQA (118 aa)) is pre-S1. Residues 2-174 (GAPLSTARRG…FSKTGDPAMN (173 aa)) are pre-S. Topologically, residues 2–181 (GAPLSTARRG…AMNMENITSG (180 aa)) are virion surface; in external conformation. Residues 2 to 253 (GAPLSTARRG…PGYRWMCLRR (252 aa)) lie on the Intravirion; in internal conformation side of the membrane. Residue P4 is glycosylated (N-linked (GlcNAc...) asparagine). The tract at residues 70-115 (PHGGLLGWSPQAQGILTTSPPDPPPASTNRRSGRKPTPVSPPLRDT) is disordered. Over residues 79–88 (PQAQGILTTS) the composition is skewed to polar residues. Residues 120 to 174 (MQWNSTQFHQALLDPRVRGLYLPAGGSSSETQNPVPTIASLTSSIFSKTGDPAMN) form a pre-S2 region. A helical transmembrane segment spans residues 182-202 (LLGPLLVLQAVCFLLTKILTI). Residues 203–253 (PQSLDSWWTSLNFLGVPPGCPGQNSQSPISNHLPTSCPPTCPGYRWMCLRR) are Intravirion; in external conformation-facing. The helical transmembrane segment at 254–274 (FIIFLFILLLCLIFLLVLLDY) threads the bilayer. Residues 275–348 (QGMLPVCPLL…WASARFSWLS (74 aa)) are Virion surface-facing. N-linked (GlcNAc...) asparagine; by host glycosylation occurs at N320. The helical transmembrane segment at 349-369 (LLVQFVQWCVGLSPTVWLLVI) threads the bilayer. Topologically, residues 370–375 (WMIWYW) are intravirion. Residues 376–398 (GPNLCSILSPFIPLLPIFCYLWA) form a helical membrane-spanning segment. Residues 399–400 (SI) are Virion surface-facing.

This sequence belongs to the orthohepadnavirus major surface antigen family. In terms of assembly, in its internal form (Li-HBsAg), interacts with the capsid protein and with the isoform S. Interacts with host chaperone CANX. Associates with host chaperone CANX through its pre-S2 N glycan; this association may be essential for isoform M proper secretion. As to quaternary structure, interacts with isoform L. Interacts with the antigens of satellite virus HDV (HDVAgs); this interaction is required for encapsidation of HDV genomic RNA. Post-translationally, isoform M is N-terminally acetylated by host at a ratio of 90%, and N-glycosylated by host at the pre-S2 region. Myristoylated.

Its subcellular location is the virion membrane. Its function is as follows. The large envelope protein exists in two topological conformations, one which is termed 'external' or Le-HBsAg and the other 'internal' or Li-HBsAg. In its external conformation the protein attaches the virus to cell receptors and thereby initiating infection. This interaction determines the species specificity and liver tropism. This attachment induces virion internalization predominantly through caveolin-mediated endocytosis. The large envelope protein also assures fusion between virion membrane and endosomal membrane. In its internal conformation the protein plays a role in virion morphogenesis and mediates the contact with the nucleocapsid like a matrix protein. Functionally, the middle envelope protein plays an important role in the budding of the virion. It is involved in the induction of budding in a nucleocapsid independent way. In this process the majority of envelope proteins bud to form subviral lipoprotein particles of 22 nm of diameter that do not contain a nucleocapsid. The protein is Large envelope protein of Hepatitis B virus genotype H subtype adw4 (isolate Nicaragua/2928Nic/1997) (HBV-H).